A 34-amino-acid polypeptide reads, in one-letter code: uncharacterized protein (34 aa).

This is an uncharacterized protein from Rhizobium radiobacter (Agrobacterium tumefaciens).